We begin with the raw amino-acid sequence, 248 residues long: 3-deoxy-manno-octulosonate cytidylyltransferase (248 aa).

Belongs to the KdsB family.

The protein resides in the cytoplasm. The enzyme catalyses 3-deoxy-alpha-D-manno-oct-2-ulosonate + CTP = CMP-3-deoxy-beta-D-manno-octulosonate + diphosphate. Its pathway is nucleotide-sugar biosynthesis; CMP-3-deoxy-D-manno-octulosonate biosynthesis; CMP-3-deoxy-D-manno-octulosonate from 3-deoxy-D-manno-octulosonate and CTP: step 1/1. It participates in bacterial outer membrane biogenesis; lipopolysaccharide biosynthesis. Its function is as follows. Activates KDO (a required 8-carbon sugar) for incorporation into bacterial lipopolysaccharide in Gram-negative bacteria. In Leptospira interrogans serogroup Icterohaemorrhagiae serovar copenhageni (strain Fiocruz L1-130), this protein is 3-deoxy-manno-octulosonate cytidylyltransferase.